We begin with the raw amino-acid sequence, 257 residues long: DNA-binding and peroxide stress resistance protein YaaA (257 aa).

Positions 35-66 (IGIARKLSAPQIGKLMSISDKLADLNATRFHD) match the Helix-hairpin-helix motif.

Belongs to the UPF0246 family.

Its subcellular location is the cytoplasm. Its function is as follows. Protects bacteria from neutrophil-related defense upon infection of mammals. Binds DNA. In Klebsiella pneumoniae subsp. pneumoniae (strain HS11286), this protein is DNA-binding and peroxide stress resistance protein YaaA.